A 481-amino-acid chain; its full sequence is ATP synthase subunit beta, chloroplastic (481 aa).

ATP is bound at residue G161 to T168.

The protein belongs to the ATPase alpha/beta chains family. F-type ATPases have 2 components, CF(1) - the catalytic core - and CF(0) - the membrane proton channel. CF(1) has five subunits: alpha(3), beta(3), gamma(1), delta(1), epsilon(1). CF(0) has four main subunits: a(1), b(1), b'(1) and c(9-12).

It localises to the plastid. The protein localises to the chloroplast thylakoid membrane. It carries out the reaction ATP + H2O + 4 H(+)(in) = ADP + phosphate + 5 H(+)(out). Produces ATP from ADP in the presence of a proton gradient across the membrane. The catalytic sites are hosted primarily by the beta subunits. The sequence is that of ATP synthase subunit beta, chloroplastic from Pylaiella littoralis (Seaweed).